Reading from the N-terminus, the 58-residue chain is MLGWTLMFLVIAVIAGLFGFTGIAGAAAGIAKIIFFIFIVLLVISLVANAIRGKAPRA.

The next 2 membrane-spanning stretches (helical) occupy residues 6 to 26 and 27 to 47; these read LMFLVIAVIAGLFGFTGIAGA and AAGIAKIIFFIFIVLLVISLV.

This sequence belongs to the UPF0391 family.

The protein localises to the cell membrane. The chain is UPF0391 membrane protein Sfri_4000 from Shewanella frigidimarina (strain NCIMB 400).